The primary structure comprises 152 residues: Transcriptional repressor NrdR (152 aa).

Residues 3-34 (CPSCQHNGTRVLDSRPVDDGKSIRRRRECESC) fold into a zinc finger. The ATP-cone domain maps to 49–139 (LIVVKKEGVR…VYRQFKDINV (91 aa)).

Belongs to the NrdR family. Zn(2+) serves as cofactor.

In terms of biological role, negatively regulates transcription of bacterial ribonucleotide reductase nrd genes and operons by binding to NrdR-boxes. The polypeptide is Transcriptional repressor NrdR (Bacillus subtilis (strain 168)).